The chain runs to 84 residues: Large ribosomal subunit protein bL31B (84 aa).

Belongs to the bacterial ribosomal protein bL31 family. Type B subfamily. Part of the 50S ribosomal subunit.

This chain is Large ribosomal subunit protein bL31B, found in Rhodococcus opacus (strain B4).